A 218-amino-acid polypeptide reads, in one-letter code: Hypoxanthine-guanine phosphoribosyltransferase (218 aa).

Lysine 69 provides a ligand contact to GMP. Lysine 103 bears the N6-acetyllysine mark. Lysine 115 is covalently cross-linked (Glycyl lysine isopeptide (Lys-Gly) (interchain with G-Cter in SUMO1); alternate). Lysine 115 is covalently cross-linked (Glycyl lysine isopeptide (Lys-Gly) (interchain with G-Cter in SUMO2); alternate). GMP is bound by residues glutamate 134–threonine 142, lysine 166, lysine 186–valine 188, and aspartate 194. The active-site Proton acceptor is the aspartate 138. Residue threonine 142 is modified to Phosphothreonine. Aspartate 194 lines the Mg(2+) pocket.

It belongs to the purine/pyrimidine phosphoribosyltransferase family. Homotetramer. Mg(2+) serves as cofactor.

It localises to the cytoplasm. It carries out the reaction IMP + diphosphate = hypoxanthine + 5-phospho-alpha-D-ribose 1-diphosphate. The enzyme catalyses GMP + diphosphate = guanine + 5-phospho-alpha-D-ribose 1-diphosphate. It participates in purine metabolism; IMP biosynthesis via salvage pathway; IMP from hypoxanthine: step 1/1. In terms of biological role, converts guanine to guanosine monophosphate, and hypoxanthine to inosine monophosphate. Transfers the 5-phosphoribosyl group from 5-phosphoribosylpyrophosphate onto the purine. Plays a central role in the generation of purine nucleotides through the purine salvage pathway. This Mus musculus (Mouse) protein is Hypoxanthine-guanine phosphoribosyltransferase (Hprt1).